Consider the following 2223-residue polypeptide: Protein Ycf2 (2223 aa).

ATP is bound at residue 1576-1583; it reads GSIGTGRS.

Belongs to the Ycf2 family.

The protein localises to the plastid. It is found in the chloroplast stroma. Its function is as follows. Probable ATPase of unknown function. Its presence in a non-photosynthetic plant (Epifagus virginiana) and experiments in tobacco indicate that it has an essential function which is probably not related to photosynthesis. The sequence is that of Protein Ycf2 from Silene latifolia (White campion).